The following is a 492-amino-acid chain: NADH-quinone oxidoreductase subunit N (492 aa).

Transmembrane regions (helical) follow at residues 12-32 (LLPY…MIAI), 44-64 (ISVV…AGII), 76-96 (LFVI…CALA), 115-135 (LYLL…AQHL), 138-158 (FFMS…YTYM), 169-189 (YLVL…FIYA), 212-232 (LILG…AAPF), 244-264 (PAPI…ALAV), 272-292 (LLAL…SILL), 306-326 (LLGY…VSIG), 334-354 (SMYM…VTLM), 381-401 (TAVM…AGFI), 416-438 (WFLA…RVLL), and 463-483 (IMVI…NSMI).

It belongs to the complex I subunit 2 family. In terms of assembly, NDH-1 is composed of 14 different subunits. Subunits NuoA, H, J, K, L, M, N constitute the membrane sector of the complex.

Its subcellular location is the cell inner membrane. It carries out the reaction a quinone + NADH + 5 H(+)(in) = a quinol + NAD(+) + 4 H(+)(out). NDH-1 shuttles electrons from NADH, via FMN and iron-sulfur (Fe-S) centers, to quinones in the respiratory chain. The immediate electron acceptor for the enzyme in this species is believed to be ubiquinone. Couples the redox reaction to proton translocation (for every two electrons transferred, four hydrogen ions are translocated across the cytoplasmic membrane), and thus conserves the redox energy in a proton gradient. This is NADH-quinone oxidoreductase subunit N from Psychrobacter arcticus (strain DSM 17307 / VKM B-2377 / 273-4).